Reading from the N-terminus, the 249-residue chain is MIKIKDVEKSYQSAHVFKRRRTPIVKGVSFECPIGATIAIIGESGSGKSTLSRMILGIEKPDKGCVTLNDQPMHKKKVRRHQIGAVFQDYTSSLHPFQTVREILFEVMCQCDGQPKEVMEVQAITLLEEVGLSKAYMDKYPNMLSGGEAQRVAIARAICINPKYILFDEAISSLDMSIQTQILDLLIHLRETRQLSYIFITHDIQAATYLCDQLIIFKNGKIEEQIPTSALHKSDNAYTRELIEKQLSF.

Residues 2–244 form the ABC transporter domain; sequence IKIKDVEKSY…DNAYTRELIE (243 aa). 42–49 serves as a coordination point for ATP; that stretch reads GESGSGKS.

This sequence belongs to the ABC transporter superfamily. In terms of assembly, the complex is composed of two ATP-binding proteins (CntD and CntF), two transmembrane proteins (CntB and CntC) and a solute-binding protein (CntA).

Its subcellular location is the cell membrane. With respect to regulation, nickel/cobalt import is reduced in the presence of zinc. Functionally, part of the ABC transporter complex CntABCDF (Opp1) involved in the uptake of metal in complex with the metallophore staphylopine (StP). Involved in the import of divalent metals ions such as nickel, cobalt and zinc. Probably responsible for energy coupling to the transport system. Plays a major role in nickel/cobalt import in zinc-depleted conditions. Contributes to virulence. Required for full urease activity in vitro. This is Metal-staphylopine import system ATP-binding protein CntF from Staphylococcus aureus (strain NCTC 8325 / PS 47).